The chain runs to 45 residues: Psychimicin (45 aa).

Intrachain disulfides connect cysteine 10-cysteine 24, cysteine 14-cysteine 36, and cysteine 25-cysteine 42.

As to quaternary structure, monomer. Hemolymph.

It localises to the secreted. Has antimicrobial activity. Is particularly active against fungi, and to a lesser extent against Gram-positive and Gram-negative bacteria. This chain is Psychimicin, found in Oiketicus kirbyi (Bagworm moth).